Consider the following 371-residue polypeptide: Aspartate-semialdehyde dehydrogenase (371 aa).

NADP(+) contacts are provided by residues 9-12 (RGMV), 37-38 (TS), and Gln-73. Position 102 (Arg-102) interacts with phosphate. Catalysis depends on Cys-135, which acts as the Acyl-thioester intermediate. Position 162 (Gln-162) interacts with substrate. Residues 165–166 (SG) and Pro-193 each bind NADP(+). Glu-241 contributes to the substrate binding site. A phosphate-binding site is contributed by Lys-244. Substrate is bound at residue Arg-268. His-275 functions as the Proton acceptor in the catalytic mechanism. Gln-351 contributes to the NADP(+) binding site.

This sequence belongs to the aspartate-semialdehyde dehydrogenase family. Homodimer.

It catalyses the reaction L-aspartate 4-semialdehyde + phosphate + NADP(+) = 4-phospho-L-aspartate + NADPH + H(+). It functions in the pathway amino-acid biosynthesis; L-lysine biosynthesis via DAP pathway; (S)-tetrahydrodipicolinate from L-aspartate: step 2/4. It participates in amino-acid biosynthesis; L-methionine biosynthesis via de novo pathway; L-homoserine from L-aspartate: step 2/3. Its pathway is amino-acid biosynthesis; L-threonine biosynthesis; L-threonine from L-aspartate: step 2/5. Its function is as follows. Catalyzes the NADPH-dependent formation of L-aspartate-semialdehyde (L-ASA) by the reductive dephosphorylation of L-aspartyl-4-phosphate. In Neisseria meningitidis serogroup B (strain ATCC BAA-335 / MC58), this protein is Aspartate-semialdehyde dehydrogenase.